We begin with the raw amino-acid sequence, 199 residues long: MFRLLKRACSFLLFFVIYQSFVIHHNVQRVLAYKPMVEKTLAENDTKANVDLVLAMIYTETKGGEADVMQSSESSSGQKNSITDSQASIEHGVNLLSHNLALAEEAGVDSWTAVQAYNFGTAYIDYIAKHGGQNTVDLATTYSKTVVAPSLGNTSGQTYFYYHPLALISGGKLYKNGGNIYYSREVHFNLYLIELMSLF.

It is found in the cell surface. This Streptococcus pyogenes serotype M6 (strain ATCC BAA-946 / MGAS10394) protein is Pneumococcal vaccine antigen A homolog (pvaA).